Consider the following 430-residue polypeptide: Glial fibrillary acidic protein (430 aa).

Residues 1–69 (MERRRITSAR…KETRASERAE (69 aa)) form a head region. Threonine 7 carries the post-translational modification Phosphothreonine; by AURKB and ROCK1. Arginine 11 carries the omega-N-methylarginine modification. Serine 12 carries the phosphoserine; by AURKB and ROCK1 modification. The residue at position 20 (arginine 20) is an Omega-N-methylarginine. Position 33 is a citrulline (arginine 33). Position 35 is a phosphoserine; by AURKB and ROCK1 (serine 35). Phosphothreonine is present on threonine 40. Residues 66–374 (ERAEMMELND…KLLEGEENRI (309 aa)) enclose the IF rod domain. The tract at residues 70–101 (MMELNDRFASYIEKVRFLEQQNKALAAELNQL) is coil 1A. Residue serine 79 is modified to Phosphoserine. The interval 102–112 (RAKEPTKLADV) is linker 1. Threonine 107 and threonine 147 each carry phosphothreonine. The coil 1B stretch occupies residues 113-211 (YQAELRELRL…EEEVRELREQ (99 aa)). The tract at residues 212–227 (LAQQQVHVEMDVAKPD) is linker 12. A coil 2A region spans residues 228–249 (LTAALREIRTQYEAVATSNMQE). A linker 2 region spans residues 250–253 (TEEW). The interval 254–374 (YRSKFADLTD…KLLEGEENRI (121 aa)) is coil 2B. Phosphoserine is present on serine 266. At arginine 267 the chain carries Citrulline. The residue at position 320 (serine 320) is a Phosphoserine. The tract at residues 375–430 (TIPVQTFSNLQIRETSLDTKSVSEGHLKRNIVVKTVEMRDGEVIKDSKQEHKDVVM) is tail. A Phosphothreonine modification is found at threonine 380. A Phosphoserine modification is found at serine 382. A citrulline mark is found at arginine 403 and arginine 413.

Belongs to the intermediate filament family. As to quaternary structure, interacts with SYNM. Interacts with PSEN1 (via N-terminus). Post-translationally, phosphorylated by PKN1. Brain; isoform 2 expressed at 20-fold lower level than isoform 1.

Its subcellular location is the cytoplasm. GFAP, a class-III intermediate filament, is a cell-specific marker that, during the development of the central nervous system, distinguishes astrocytes from other glial cells. This Mus musculus (Mouse) protein is Glial fibrillary acidic protein (Gfap).